We begin with the raw amino-acid sequence, 724 residues long: Probable serine/threonine-protein kinase KKQ8 (724 aa).

Disordered stretches follow at residues 1–81 and 93–188; these read MVMQ…RQRS and HPFR…KDIL. Ser-19 is modified (phosphoserine). Positions 45–54 are enriched in low complexity; it reads PYRSSSTSPK. The span at 95-106 shows a compositional bias: polar residues; the sequence is FRQTGSGASNSP. A compositionally biased stretch (low complexity) spans 143–162; sequence RSSSVSSCDSSNGTTSSSDS. Residues Ser-232, Ser-238, and Ser-241 each carry the phosphoserine modification. Positions 329-355 are disordered; that stretch reads SQTNHEKRTGQSPNDSNRSSPTQGRED. The segment covering 338–351 has biased composition (polar residues); sequence GQSPNDSNRSSPTQ. The Protein kinase domain maps to 412-712; it reads GHPVGLVGAG…VGKLLDMQWM (301 aa). ATP-binding positions include 418 to 426 and Lys-455; that span reads VGAGAYGEV. The active-site Proton acceptor is Asp-563.

The protein belongs to the protein kinase superfamily. CAMK Ser/Thr protein kinase family. NPR/HAL subfamily. HAL5 sub-subfamily.

The protein localises to the cytoplasm. It carries out the reaction L-seryl-[protein] + ATP = O-phospho-L-seryl-[protein] + ADP + H(+). It catalyses the reaction L-threonyl-[protein] + ATP = O-phospho-L-threonyl-[protein] + ADP + H(+). In Saccharomyces cerevisiae (strain ATCC 204508 / S288c) (Baker's yeast), this protein is Probable serine/threonine-protein kinase KKQ8 (KKQ8).